The sequence spans 95 residues: Aspartyl/glutamyl-tRNA(Asn/Gln) amidotransferase subunit C (95 aa).

It belongs to the GatC family. In terms of assembly, heterotrimer of A, B and C subunits.

The catalysed reaction is L-glutamyl-tRNA(Gln) + L-glutamine + ATP + H2O = L-glutaminyl-tRNA(Gln) + L-glutamate + ADP + phosphate + H(+). The enzyme catalyses L-aspartyl-tRNA(Asn) + L-glutamine + ATP + H2O = L-asparaginyl-tRNA(Asn) + L-glutamate + ADP + phosphate + 2 H(+). Allows the formation of correctly charged Asn-tRNA(Asn) or Gln-tRNA(Gln) through the transamidation of misacylated Asp-tRNA(Asn) or Glu-tRNA(Gln) in organisms which lack either or both of asparaginyl-tRNA or glutaminyl-tRNA synthetases. The reaction takes place in the presence of glutamine and ATP through an activated phospho-Asp-tRNA(Asn) or phospho-Glu-tRNA(Gln). The protein is Aspartyl/glutamyl-tRNA(Asn/Gln) amidotransferase subunit C of Geobacter sp. (strain M21).